The following is a 627-amino-acid chain: MALNLRQKQTECVIRMLNLNQPLNPSGTANEEVYKILIYDRFCQNILSPLTHVKDLRKHGVTLFFLIDKDRQPVHDVPAVYFVQPTESNLQRIIADASRSLYDTFHLNFSSSIPRKFLEELASGTLKSGSVEKVSKVHDQYLEFVTLEDNLFSLAQQSTYVQMNDPSAGEKEINEIIERVASGLFCVLVTLGVVPVIRCPSGGPAEMVASLLDQKLRDHLLSKNNLFTEGGGFMSSFQRPLLCIFDRNFELSVGIQHDFRYRPLVHDVLGLKLNQLKVQGEKGPPKSFELDSSDPFWSANSTLEFPDVAVEIETQLNKYKRDVEEVNKKTGGGSGAEFDGTDLIGNIHTEHLMNTVKSLPELTERKKVIDKHTNIATALLGQIKERSIDAFTKKESDMMMRGGIDRTELMAALKGKGTKMDKLRFAIMYLISTETINQSEVEAVEAALNEAEADTSAFQYVKKIKSLNASFAATSANSASRSNIVDWAEKLYGQSISAVTAGVKNLLSSDQQLAVTRTVEALTEGKPNPEIDSYRFLDPRAPKSSSSGGSHVKGPFREAIVFMIGGGNYVEYGSLQELTQRQLTVKNVIYGATEILNGGELVEQLGLLGKKMGLGGPVASTSLSGGH.

The interval 526-551 (KPNPEIDSYRFLDPRAPKSSSSGGSH) is disordered. Basic and acidic residues predominate over residues 527 to 541 (PNPEIDSYRFLDPRA).

It belongs to the STXBP/unc-18/SEC1 family.

Functionally, may be involved in the early secretory pathway. This chain is SEC1 family transport protein SLY1 (SLY1), found in Arabidopsis thaliana (Mouse-ear cress).